A 286-amino-acid chain; its full sequence is Bifunctional protein FolD (286 aa).

Residues 164–166 (GAS), Ile-189, and Ile-230 each bind NADP(+).

This sequence belongs to the tetrahydrofolate dehydrogenase/cyclohydrolase family. As to quaternary structure, homodimer.

It catalyses the reaction (6R)-5,10-methylene-5,6,7,8-tetrahydrofolate + NADP(+) = (6R)-5,10-methenyltetrahydrofolate + NADPH. The enzyme catalyses (6R)-5,10-methenyltetrahydrofolate + H2O = (6R)-10-formyltetrahydrofolate + H(+). It functions in the pathway one-carbon metabolism; tetrahydrofolate interconversion. In terms of biological role, catalyzes the oxidation of 5,10-methylenetetrahydrofolate to 5,10-methenyltetrahydrofolate and then the hydrolysis of 5,10-methenyltetrahydrofolate to 10-formyltetrahydrofolate. This Wolinella succinogenes (strain ATCC 29543 / DSM 1740 / CCUG 13145 / JCM 31913 / LMG 7466 / NCTC 11488 / FDC 602W) (Vibrio succinogenes) protein is Bifunctional protein FolD.